The chain runs to 78 residues: Hainantoxin-XX (78 aa).

The signal sequence occupies residues 1 to 23 (MKSATLLALSFLLIALYFLICEA). Positions 24 to 47 (EHSRYEEHEILEENMGDVVNLEQR) are excised as a propeptide. 3 disulfide bridges follow: C49–C62, C56–C66, and C61–C77.

The protein belongs to the hainantoxin family. 20 subfamily. In terms of tissue distribution, expressed by the venom gland.

Its subcellular location is the secreted. In terms of biological role, putative ion channel inhibitor. This chain is Hainantoxin-XX, found in Cyriopagopus hainanus (Chinese bird spider).